Here is a 306-residue protein sequence, read N- to C-terminus: Cysteine synthase (306 aa).

The residue at position 46 (K46) is an N6-(pyridoxal phosphate)lysine. Pyridoxal 5'-phosphate-binding positions include N76, 180-184, and S267; that span reads GSGGT.

Belongs to the cysteine synthase/cystathionine beta-synthase family. As to quaternary structure, homodimer. Pyridoxal 5'-phosphate serves as cofactor.

The enzyme catalyses O-acetyl-L-serine + hydrogen sulfide = L-cysteine + acetate. Its pathway is amino-acid biosynthesis; L-cysteine biosynthesis; L-cysteine from L-serine: step 2/2. This chain is Cysteine synthase (cysM), found in Helicobacter pylori (strain ATCC 700392 / 26695) (Campylobacter pylori).